The primary structure comprises 173 residues: Alpha-crystallin A chain (173 aa).

M1 is modified (N-acetylmethionine). The required for complex formation with BFSP1 and BFSP2; during homooligomerization, mediates the association of 2 dimers to form a tetramer stretch occupies residues 1–63 (MDVTIQHPWF…RTVLDSGISE (63 aa)). Q6 bears the Deamidated glutamine; partial mark. S45 carries the post-translational modification Phosphoserine. Q50 bears the Deamidated glutamine; partial mark. In terms of domain architecture, sHSP spans 52 to 164 (LFRTVLDSGI…AERAIPVSRE (113 aa)). N6-acetyllysine is present on K70. The residue at position 90 (Q90) is a Deamidated glutamine; partial. Position 99 is an N6-acetyllysine (K99). A Zn(2+)-binding site is contributed by H100. Position 101 is a deamidated asparagine; partial (N101). The Zn(2+) site is built by E102 and H107. At S122 the chain carries Phosphoserine. N123 is modified (deamidated asparagine; partial). Cysteines 131 and 142 form a disulfide. Q147 is modified (deamidated glutamine; partial). H154 lines the Zn(2+) pocket. O-linked (GlcNAc) serine glycosylation occurs at S162.

Belongs to the small heat shock protein (HSP20) family. Heteropolymer composed of three CRYAA and one CRYAB subunits. Inter-subunit bridging via zinc ions enhances stability, which is crucial as there is no protein turn over in the lens. Can also form homodimers and homotetramers (dimers of dimers) which serve as the building blocks of homooligomers. Within homooligomers, the zinc-binding motif is created from residues of 3 different molecules. His-100 and Glu-102 from one molecule are ligands of the zinc ion, and His-107 and His-154 residues from additional molecules complete the site with tetrahedral coordination geometry. Part of a complex required for lens intermediate filament formation composed of BFSP1, BFSP2 and CRYAA. O-glycosylated; contains N-acetylglucosamine side chains. In terms of processing, deamidation of Asn-101 in lens occurs mostly during the first 30 years of age, followed by a small additional amount of deamidation (approximately 5%) during the next approximately 38 years, resulting in a maximum of approximately 50% deamidation during the lifetime of the individual. Post-translationally, phosphorylation on Ser-122 seems to be developmentally regulated. Absent in the first months of life, it appears during the first 12 years of human lifetime. The relative amount of phosphorylated form versus unphosphorylated form does not change over the lifetime of the individual. Acetylation at Lys-70 may increase chaperone activity. In terms of processing, undergoes age-dependent proteolytical cleavage at the C-terminus. Alpha-crystallin A(1-172) is the most predominant form produced most rapidly during the first 12 years of age and after this age is present in approximately 50% of the lens molecules. Post-translationally, in young individuals and during the first approximately 30 years of life, less than half molecules contain an intramolecular disulfide bond (oxidized form), while in the remaining fraction the cysteines are in the free sulfhydryl form (reduced form). With aging, the amount of oxidized form increases up to 90% and it becomes a major constituent of high molecular weight aggregates, concomitant with an age-dependent loss of its chaperone activity. The reduced form is undetectable in cataractous lenses. Expressed in the eye lens (at protein level).

It is found in the cytoplasm. Its subcellular location is the nucleus. Contributes to the transparency and refractive index of the lens. In its oxidized form (absence of intramolecular disulfide bond), acts as a chaperone, preventing aggregation of various proteins under a wide range of stress conditions. Required for the correct formation of lens intermediate filaments as part of a complex composed of BFSP1, BFSP2 and CRYAA. The protein is Alpha-crystallin A chain (CRYAA) of Homo sapiens (Human).